The primary structure comprises 261 residues: MIFVISPAKALDFETPPVTAAATQPDYLREAEELIGILRQKTPAEVAELMHLSDPLAALNVARYERWHRPFTPDNAKQALLAFNGDVYGGLDAPSLSEDDFAWAQQHLRILSGLYGMLRPLDLMQPYRLEMGTRLGNPRGANLYAYWGDTLAEALNRLLAAERDAGGSAVLVNLASQEYFKAAARAKLTAQVITPVFEDWKGGRYRIITFYAKRARGLMSRYAIRNRVEDVEGLKGFDAEGYGFAPDVSDAETLVFRRRAD.

Belongs to the UPF0246 family.

The chain is UPF0246 protein AZOSEA34360 from Aromatoleum aromaticum (strain DSM 19018 / LMG 30748 / EbN1) (Azoarcus sp. (strain EbN1)).